The sequence spans 166 residues: Pyruvoyl-dependent arginine decarboxylase (166 aa).

Residue Ser-45 is modified to Pyruvic acid (Ser).

It belongs to the PdaD family. Pyruvate is required as a cofactor.

The catalysed reaction is L-arginine + H(+) = agmatine + CO2. The sequence is that of Pyruvoyl-dependent arginine decarboxylase from Methanocella arvoryzae (strain DSM 22066 / NBRC 105507 / MRE50).